The primary structure comprises 76 residues: Small ribosomal subunit protein bS18 (76 aa).

The protein belongs to the bacterial ribosomal protein bS18 family. Part of the 30S ribosomal subunit. Forms a tight heterodimer with protein bS6.

In terms of biological role, binds as a heterodimer with protein bS6 to the central domain of the 16S rRNA, where it helps stabilize the platform of the 30S subunit. The protein is Small ribosomal subunit protein bS18 of Symbiobacterium thermophilum (strain DSM 24528 / JCM 14929 / IAM 14863 / T).